A 309-amino-acid polypeptide reads, in one-letter code: Ribonuclease Z (309 aa).

Zn(2+)-binding residues include histidine 61, histidine 63, aspartate 65, histidine 66, histidine 144, aspartate 212, and histidine 271. The Proton acceptor role is filled by aspartate 65.

This sequence belongs to the RNase Z family. Homodimer. It depends on Zn(2+) as a cofactor.

The enzyme catalyses Endonucleolytic cleavage of RNA, removing extra 3' nucleotides from tRNA precursor, generating 3' termini of tRNAs. A 3'-hydroxy group is left at the tRNA terminus and a 5'-phosphoryl group is left at the trailer molecule.. Functionally, zinc phosphodiesterase, which displays some tRNA 3'-processing endonuclease activity. Probably involved in tRNA maturation, by removing a 3'-trailer from precursor tRNA. The sequence is that of Ribonuclease Z from Clostridium acetobutylicum (strain ATCC 824 / DSM 792 / JCM 1419 / IAM 19013 / LMG 5710 / NBRC 13948 / NRRL B-527 / VKM B-1787 / 2291 / W).